We begin with the raw amino-acid sequence, 275 residues long: Large ribosomal subunit protein uL2c (275 aa).

Disordered stretches follow at residues Pro-29–Arg-60 and Met-225–His-252. Residues Ser-51 to Arg-60 are compositionally biased toward basic residues.

Belongs to the universal ribosomal protein uL2 family. Part of the 50S ribosomal subunit.

The protein localises to the plastid. It localises to the chloroplast. This chain is Large ribosomal subunit protein uL2c (rpl2), found in Chlorokybus atmophyticus (Soil alga).